Consider the following 399-residue polypeptide: Elongation factor Tu (399 aa).

The tr-type G domain maps to 10 to 209; the sequence is KPHVNIGTIG…DVDEYIPTPV (200 aa). Residues 19–26 form a G1 region; sequence GHVDHGKT. 19–26 provides a ligand contact to GTP; it reads GHVDHGKT. Threonine 26 serves as a coordination point for Mg(2+). The G2 stretch occupies residues 62–66; sequence GITIN. The interval 83–86 is G3; that stretch reads DCPG. GTP-binding positions include 83–87 and 138–141; these read DCPGH and NKCD. A G4 region spans residues 138–141; the sequence is NKCD. The segment at 175–177 is G5; that stretch reads SAY.

This sequence belongs to the TRAFAC class translation factor GTPase superfamily. Classic translation factor GTPase family. EF-Tu/EF-1A subfamily. As to quaternary structure, monomer.

The protein localises to the cytoplasm. The catalysed reaction is GTP + H2O = GDP + phosphate + H(+). GTP hydrolase that promotes the GTP-dependent binding of aminoacyl-tRNA to the A-site of ribosomes during protein biosynthesis. In Bifidobacterium animalis subsp. lactis (strain AD011), this protein is Elongation factor Tu.